The sequence spans 315 residues: Methionyl-tRNA formyltransferase (315 aa).

113–116 (SLLP) is a (6S)-5,6,7,8-tetrahydrofolate binding site.

Belongs to the Fmt family.

It carries out the reaction L-methionyl-tRNA(fMet) + (6R)-10-formyltetrahydrofolate = N-formyl-L-methionyl-tRNA(fMet) + (6S)-5,6,7,8-tetrahydrofolate + H(+). Functionally, attaches a formyl group to the free amino group of methionyl-tRNA(fMet). The formyl group appears to play a dual role in the initiator identity of N-formylmethionyl-tRNA by promoting its recognition by IF2 and preventing the misappropriation of this tRNA by the elongation apparatus. The polypeptide is Methionyl-tRNA formyltransferase (Salmonella enteritidis PT4 (strain P125109)).